The primary structure comprises 173 residues: Telomerase RNA component interacting RNase (173 aa).

Basic and acidic residues predominate over residues Met1 to Gly12. The disordered stretch occupies residues Met1–Gly119. Composition is skewed to low complexity over residues Glu14–Arg23 and Ser43–Val52. Basic and acidic residues predominate over residues Leu64–Glu79. A compositionally biased stretch (pro residues) spans Pro80–Pro90. Lys143 is modified (N6-acetyllysine).

In terms of assembly, part of the telomerase RNA 3' end complex which contains about 488 proteins.

Functionally, exoribonuclease that is part of the telomerase RNA 3' end processing complex and which has the ability to cleave all four unpaired RNA nucleotides from the 5' end or 3' end with higher efficiency for purine bases. The sequence is that of Telomerase RNA component interacting RNase from Mus musculus (Mouse).